Here is a 120-residue protein sequence, read N- to C-terminus: Chaperonin GroEL (120 aa).

Asp-23–Thr-27 serves as a coordination point for ATP.

It belongs to the chaperonin (HSP60) family. In terms of assembly, forms a cylinder of 14 subunits composed of two heptameric rings stacked back-to-back. Interacts with the co-chaperonin GroES.

The protein localises to the cytoplasm. It carries out the reaction ATP + H2O + a folded polypeptide = ADP + phosphate + an unfolded polypeptide.. Functionally, together with its co-chaperonin GroES, plays an essential role in assisting protein folding. The GroEL-GroES system forms a nano-cage that allows encapsulation of the non-native substrate proteins and provides a physical environment optimized to promote and accelerate protein folding. The polypeptide is Chaperonin GroEL (Mycobacterium shimoidei).